The following is a 121-amino-acid chain: Large ribosomal subunit protein uL18 (121 aa).

Residues 1-25 form a disordered region; that stretch reads MKIVISKPDKNKIRQKRHRRVRGKL. Residues 13-23 are compositionally biased toward basic residues; the sequence is IRQKRHRRVRG.

This sequence belongs to the universal ribosomal protein uL18 family. In terms of assembly, part of the 50S ribosomal subunit; part of the 5S rRNA/L5/L18/L25 subcomplex. Contacts the 5S and 23S rRNAs.

Functionally, this is one of the proteins that bind and probably mediate the attachment of the 5S RNA into the large ribosomal subunit, where it forms part of the central protuberance. In Streptococcus pyogenes serotype M28 (strain MGAS6180), this protein is Large ribosomal subunit protein uL18.